The primary structure comprises 197 residues: Imidazoleglycerol-phosphate dehydratase (197 aa).

Belongs to the imidazoleglycerol-phosphate dehydratase family.

The protein localises to the cytoplasm. The catalysed reaction is D-erythro-1-(imidazol-4-yl)glycerol 3-phosphate = 3-(imidazol-4-yl)-2-oxopropyl phosphate + H2O. Its pathway is amino-acid biosynthesis; L-histidine biosynthesis; L-histidine from 5-phospho-alpha-D-ribose 1-diphosphate: step 6/9. This Pseudomonas entomophila (strain L48) protein is Imidazoleglycerol-phosphate dehydratase.